Reading from the N-terminus, the 302-residue chain is Sulfate adenylyltransferase subunit 2 (302 aa).

The protein belongs to the PAPS reductase family. CysD subfamily. As to quaternary structure, heterodimer composed of CysD, the smaller subunit, and CysN.

The enzyme catalyses sulfate + ATP + H(+) = adenosine 5'-phosphosulfate + diphosphate. Its pathway is sulfur metabolism; hydrogen sulfide biosynthesis; sulfite from sulfate: step 1/3. Its function is as follows. With CysN forms the ATP sulfurylase (ATPS) that catalyzes the adenylation of sulfate producing adenosine 5'-phosphosulfate (APS) and diphosphate, the first enzymatic step in sulfur assimilation pathway. APS synthesis involves the formation of a high-energy phosphoric-sulfuric acid anhydride bond driven by GTP hydrolysis by CysN coupled to ATP hydrolysis by CysD. The chain is Sulfate adenylyltransferase subunit 2 from Xanthomonas axonopodis pv. citri (strain 306).